Here is a 241-residue protein sequence, read N- to C-terminus: Large ribosomal subunit protein bL25 (241 aa).

The interval 214-241 (LDAVKAGEEGSRAQQETEEASERADQGQ) is disordered.

Belongs to the bacterial ribosomal protein bL25 family. CTC subfamily. In terms of assembly, part of the 50S ribosomal subunit; part of the 5S rRNA/L5/L18/L25 subcomplex. Contacts the 5S rRNA. Binds to the 5S rRNA independently of L5 and L18.

Functionally, this is one of the proteins that binds to the 5S RNA in the ribosome where it forms part of the central protuberance. This is Large ribosomal subunit protein bL25 from Deinococcus geothermalis (strain DSM 11300 / CIP 105573 / AG-3a).